We begin with the raw amino-acid sequence, 167 residues long: Fluoride-specific ion channel FluC (167 aa).

The next 4 membrane-spanning stretches (helical) occupy residues 32-52 (HVTPIYTIAAISLGASLGALA), 69-89 (IGTLAANLIAAYVVGVTIAYV), 102-122 (FMITGLAGGLSTFSTFTAELF), and 137-157 (LGLHVGGSLALLMLGMLTIGL). Na(+)-binding residues include Gly109 and Ser112.

Belongs to the fluoride channel Fluc/FEX (TC 1.A.43) family.

The protein resides in the cell inner membrane. It carries out the reaction fluoride(in) = fluoride(out). With respect to regulation, na(+) is not transported, but it plays an essential structural role and its presence is essential for fluoride channel function. Functionally, fluoride-specific ion channel. Important for reducing fluoride concentration in the cell, thus reducing its toxicity. The sequence is that of Fluoride-specific ion channel FluC from Xanthomonas oryzae pv. oryzae (strain KACC10331 / KXO85).